A 128-amino-acid chain; its full sequence is Cytochrome c-type biogenesis protein CcmE (128 aa).

Topologically, residues 1-8 (MQKRVRNR) are cytoplasmic. Residues 9-29 (LITIIICFCSAALGISIVLYN) form a helical; Signal-anchor for type II membrane protein membrane-spanning segment. Residues 30–128 (LEKNIVFFLP…KHDENYRPPS (99 aa)) are Periplasmic-facing. 2 residues coordinate heme: histidine 120 and tyrosine 124.

This sequence belongs to the CcmE/CycJ family.

The protein localises to the cell inner membrane. Functionally, heme chaperone required for the biogenesis of c-type cytochromes. Transiently binds heme delivered by CcmC and transfers the heme to apo-cytochromes in a process facilitated by CcmF and CcmH. This chain is Cytochrome c-type biogenesis protein CcmE, found in Rickettsia felis (strain ATCC VR-1525 / URRWXCal2) (Rickettsia azadi).